The following is a 37-amino-acid chain: Large ribosomal subunit protein bL36 (37 aa).

Belongs to the bacterial ribosomal protein bL36 family.

The sequence is that of Large ribosomal subunit protein bL36 from Acidothermus cellulolyticus (strain ATCC 43068 / DSM 8971 / 11B).